Consider the following 348-residue polypeptide: Protein-arginine N-acetylglucosaminyltransferase SseK2 (348 aa).

UDP-N-acetyl-alpha-D-glucosamine is bound by residues 64–66 (QWF), Y88, and 237–240 (YLDA). The short motif at 239–241 (DAD) is the DXD motif element. D241 is a binding site for Mn(2+). Catalysis depends on E271, which acts as the Proton acceptor. Residues N338, S340, and 345–348 (SSWR) each bind UDP-N-acetyl-alpha-D-glucosamine. 2 residues coordinate Mn(2+): N338 and S340.

It belongs to the glycosyltransferase NleB family. Mn(2+) is required as a cofactor.

It is found in the secreted. The protein resides in the host Golgi apparatus. It catalyses the reaction L-arginyl-[protein] + UDP-N-acetyl-alpha-D-glucosamine = N(omega)-(N-acetyl-beta-D-glucosaminyl)-L-arginyl-[protein] + UDP + H(+). With respect to regulation, protein-arginine N-acetylglucosaminyltransferase activity is inhibited by 100066N compound (flavone analog) and 102644N compound (a substituted isoxazole). Protein-arginine N-acetylglucosaminyltransferase effector that catalyzes the transfer of a single N-acetylglucosamine (GlcNAc) to a conserved arginine residue in the death domain of host proteins such as FADD: arginine GlcNAcylation prevents homotypic/heterotypic death domain interactions. Also acts on host proteins without a death domain: catalyzes arginine GlcNAcylation of host small Rab1 GTPase, thereby preventing GTPase activity and leading to impaired host vesicular protein transport. In contrast to Ssek1, not able to disrupt TNF signaling in infected cells. This Salmonella typhimurium (strain SL1344) protein is Protein-arginine N-acetylglucosaminyltransferase SseK2.